Reading from the N-terminus, the 142-residue chain is Protein NIM1-INTERACTING 1 (142 aa).

The interval 47–53 is involved in NPR1/NIM1 interaction; sequence DTFFKLI. The Nuclear localization signal motif lies at 60-64; it reads RKRRR. Disordered regions lie at residues 63–86 and 108–142; these read RREE…RSGI and MFVS…NLAL. A coiled-coil region spans residues 110-141; that stretch reads VSDHKEENTKVEQEEDQTEERNEDKALDLNLA. Over residues 111–121 the composition is skewed to basic and acidic residues; that stretch reads SDHKEENTKVE.

Belongs to the NPR1-interactor family. As to quaternary structure, interacts with NPR1 C-terminal region.

The protein localises to the nucleus. In Arabidopsis thaliana (Mouse-ear cress), this protein is Protein NIM1-INTERACTING 1.